The primary structure comprises 613 residues: Nuclear receptor subfamily 1 group D member 1 (613 aa).

A compositionally biased stretch (polar residues) spans 1-48 (MTTLDSNNNTGGVITYIGSSGSSPNRTSPESLYSDSSNGSFQSLTQGC). A required for phosphorylation by CSNK1E and cytoplasmic localization region spans residues 1 to 70 (MTTLDSNNNT…TQDPARSFGS (70 aa)). The segment at 1–102 (MTTLDSNNNT…SSFYNGSPPG (102 aa)) is disordered. The segment at 1 to 129 (MTTLDSNNNT…TSNITKLNGM (129 aa)) is modulating. Positions 49-285 (PTYFPPSPTG…PPRSPSPEPT (237 aa)) are crucial for activation of GJA1. Phosphoserine; by GSK3-beta is present on residues S55 and S59. Residues 69–102 (GSIPPSLGDDGSPSSSSSSSSSSSSSFYNGSPPG) are compositionally biased toward low complexity. The nuclear receptor DNA-binding region spans 130–206 (VLLCKVCGDV…VGMSRDAVRF (77 aa)). NR C4-type zinc fingers lie at residues 133-153 (CKVCGDVASGFHYGVHACEGC) and 170-194 (CLKNENCSIVRINRNRCQQCRFKKC). An N6-acetyllysine; by KAT5 mark is found at K192 and K193. The disordered stretch occupies residues 233 to 286 (SSQCPLETPPTQHPTPGPMGPSPPPAPAPSPLVGFSQFPQQLTPPRSPSPEPTV). Pro residues predominate over residues 239 to 262 (ETPPTQHPTPGPMGPSPPPAPAPS). Phosphothreonine; by CDK1 is present on T275. One can recognise an NR LBD domain in the interval 285–613 (TVEDVISQVA…KLLSFRVDAQ (329 aa)). C417 lines the heme pocket. Residue K590 is modified to N6-acetyllysine. H601 contacts heme.

The protein belongs to the nuclear hormone receptor family. NR1 subfamily. In terms of assembly, binds DNA as a monomer or a homodimer. Interacts with C1D, SP1 and ZNHIT1. Interacts with OPHN1 (via C-terminus). Interacts with PER2; the interaction associates PER2 to BMAL1 promoter region. Interacts with CRY1. Interacts with CCAR2. Interacts with NR2E3. Interacts with SIAH2. Interacts with FBXW7 and CDK1. Interacts with HUWE1. Interacts with NR0B2. Interacts with NFIL3. Interacts (via domain NR LBD) with HSP90AA1 and HSP90AB1. Post-translationally, ubiquitinated, leading to its proteasomal degradation. Ubiquitinated by the SCF(FBXW7) complex when phosphorylated by CDK1 leading to its proteasomal degradation. Ubiquitinated by SIAH2; leading to its proteasomal degradation. Rapidly ubiquitinated in response to inflammatory triggers and sumoylation is a prerequisite to its ubiquitination. Sumoylated by UBE2I, desumoylated by SENP1, and sumoylation is a prerequisite to its ubiquitination. In terms of processing, phosphorylated by CSNK1E; phosphorylation enhances its cytoplasmic localization. Post-translationally, undergoes lysosome-mediated degradation in a time-dependent manner in the liver. In terms of tissue distribution, expressed in all tissues and cell lines examined. Expressed at high levels in some squamous carcinoma cell lines.

It is found in the nucleus. It localises to the cytoplasm. The protein resides in the cell projection. The protein localises to the dendrite. Its subcellular location is the dendritic spine. In terms of biological role, transcriptional repressor which coordinates circadian rhythm and metabolic pathways in a heme-dependent manner. Integral component of the complex transcription machinery that governs circadian rhythmicity and forms a critical negative limb of the circadian clock by directly repressing the expression of core clock components BMAL1, CLOCK and CRY1. Also regulates genes involved in metabolic functions, including lipid and bile acid metabolism, adipogenesis, gluconeogenesis and the macrophage inflammatory response. Acts as a receptor for heme which stimulates its interaction with the NCOR1/HDAC3 corepressor complex, enhancing transcriptional repression. Recognizes two classes of DNA response elements within the promoter of its target genes and can bind to DNA as either monomers or homodimers, depending on the nature of the response element. Binds as a monomer to a response element composed of the consensus half-site motif 5'-[A/G]GGTCA-3' preceded by an A/T-rich 5' sequence (RevRE), or as a homodimer to a direct repeat of the core motif spaced by two nucleotides (RevDR-2). Acts as a potent competitive repressor of ROR alpha (RORA) function and regulates the levels of its ligand heme by repressing the expression of PPARGC1A, a potent inducer of heme synthesis. Regulates lipid metabolism by repressing the expression of APOC3 and by influencing the activity of sterol response element binding proteins (SREBPs); represses INSIG2 which interferes with the proteolytic activation of SREBPs which in turn govern the rhythmic expression of enzymes with key functions in sterol and fatty acid synthesis. Regulates gluconeogenesis via repression of G6PC1 and PEPCK and adipocyte differentiation via repression of PPARG. Regulates glucagon release in pancreatic alpha-cells via the AMPK-NAMPT-SIRT1 pathway and the proliferation, glucose-induced insulin secretion and expression of key lipogenic genes in pancreatic-beta cells. Positively regulates bile acid synthesis by increasing hepatic expression of CYP7A1 via repression of NR0B2 and NFIL3 which are negative regulators of CYP7A1. Modulates skeletal muscle oxidative capacity by regulating mitochondrial biogenesis and autophagy; controls mitochondrial biogenesis and respiration by interfering with the STK11-PRKAA1/2-SIRT1-PPARGC1A signaling pathway. Represses the expression of SERPINE1/PAI1, an important modulator of cardiovascular disease and the expression of inflammatory cytokines and chemokines in macrophages. Represses gene expression at a distance in macrophages by inhibiting the transcription of enhancer-derived RNAs (eRNAs). Plays a role in the circadian regulation of body temperature and negatively regulates thermogenic transcriptional programs in brown adipose tissue (BAT); imposes a circadian oscillation in BAT activity, increasing body temperature when awake and depressing thermogenesis during sleep. In concert with NR2E3, regulates transcriptional networks critical for photoreceptor development and function. In addition to its activity as a repressor, can also act as a transcriptional activator. In the ovarian granulosa cells acts as a transcriptional activator of STAR which plays a role in steroid biosynthesis. In collaboration with SP1, activates GJA1 transcription in a heme-independent manner. Represses the transcription of CYP2B10, CYP4A10 and CYP4A14. Represses the transcription of CES2. Represses and regulates the circadian expression of TSHB in a NCOR1-dependent manner. Negatively regulates the protein stability of NR3C1 and influences the time-dependent subcellular distribution of NR3C1, thereby affecting its transcriptional regulatory activity. Plays a critical role in the circadian control of neutrophilic inflammation in the lung; under resting, non-stress conditions, acts as a rhythmic repressor to limit inflammatory activity whereas in the presence of inflammatory triggers undergoes ubiquitin-mediated degradation thereby relieving inhibition of the inflammatory response. Plays a key role in the circadian regulation of microglial activation and neuroinflammation; suppresses microglial activation through the NF-kappaB pathway in the central nervous system. Plays a role in the regulation of the diurnal rhythms of lipid and protein metabolism in the skeletal muscle via transcriptional repression of genes controlling lipid and amino acid metabolism in the muscle. This chain is Nuclear receptor subfamily 1 group D member 1 (NR1D1), found in Bos taurus (Bovine).